We begin with the raw amino-acid sequence, 410 residues long: FAS1 domain-containing protein CaO19.3004 (410 aa).

A signal peptide spans 1–18; that stretch reads MKLSKLLQLAVFSSLVTS. 2 stretches are compositionally biased toward basic and acidic residues: residues 64–73 and 83–96; these read NAKFKRDPKN and GSAEEEQKDKREPK. The segment at 64-98 is disordered; it reads NAKFKRDPKNVIDPASLKEGSAEEEQKDKREPKNL. One can recognise an FAS1 domain in the interval 247-407; it reads NNLLQSILPQ…GFVLIINDSL (161 aa).

The protein localises to the vacuole. The protein is FAS1 domain-containing protein CaO19.3004 of Candida albicans (strain SC5314 / ATCC MYA-2876) (Yeast).